The sequence spans 370 residues: Ornithine carbamoyltransferase, mitochondrial (370 aa).

Residues 1-38 constitute a mitochondrion transit peptide; it reads MPSPLRTAPQPPLRAFHNPPALRRLYSSTSHSAATPAT. Residues 97 to 100, Arg-148, His-175, and Gln-178 contribute to the carbamoyl phosphate site; that span reads STRT. L-ornithine contacts are provided by Asn-216, Asp-282, Ser-286, and Met-287. Cys-324 acts as the Proton acceptor in catalysis. Carbamoyl phosphate is bound by residues 324–325 and Arg-351; that span reads CL.

Belongs to the aspartate/ornithine carbamoyltransferase superfamily. OTCase family. Homotrimer.

The protein resides in the mitochondrion matrix. The catalysed reaction is carbamoyl phosphate + L-ornithine = L-citrulline + phosphate + H(+). It participates in amino-acid biosynthesis; L-arginine biosynthesis; L-arginine from L-ornithine and carbamoyl phosphate: step 1/3. The protein is Ornithine carbamoyltransferase, mitochondrial (argB) of Aspergillus niger.